A 127-amino-acid polypeptide reads, in one-letter code: Holo-[acyl-carrier-protein] synthase (127 aa).

2 residues coordinate Mg(2+): Asp-8 and Glu-57.

The protein belongs to the P-Pant transferase superfamily. AcpS family. Mg(2+) serves as cofactor.

It is found in the cytoplasm. The catalysed reaction is apo-[ACP] + CoA = holo-[ACP] + adenosine 3',5'-bisphosphate + H(+). In terms of biological role, transfers the 4'-phosphopantetheine moiety from coenzyme A to a Ser of acyl-carrier-protein. In Vesicomyosocius okutanii subsp. Calyptogena okutanii (strain HA), this protein is Holo-[acyl-carrier-protein] synthase.